The chain runs to 325 residues: tRNA dimethylallyltransferase (325 aa).

21–28 (GPTASGKS) provides a ligand contact to ATP. Residue 23-28 (TASGKS) participates in substrate binding. Residues 166-170 (QRLAR) form an interaction with substrate tRNA region.

Belongs to the IPP transferase family. As to quaternary structure, monomer. Mg(2+) is required as a cofactor.

The enzyme catalyses adenosine(37) in tRNA + dimethylallyl diphosphate = N(6)-dimethylallyladenosine(37) in tRNA + diphosphate. Catalyzes the transfer of a dimethylallyl group onto the adenine at position 37 in tRNAs that read codons beginning with uridine, leading to the formation of N6-(dimethylallyl)adenosine (i(6)A). This Acidiphilium cryptum (strain JF-5) protein is tRNA dimethylallyltransferase.